A 246-amino-acid polypeptide reads, in one-letter code: LexA repressor (246 aa).

The disordered stretch occupies residues 1–34; sequence MATPQTGKKTPSRRVSELPDGPPDATGLTPRQQR. Residues 52–72 constitute a DNA-binding region (H-T-H motif); sequence MREIGEAVGLTSSSSVAHQLK. Catalysis depends on for autocatalytic cleavage activity residues serine 170 and lysine 207.

This sequence belongs to the peptidase S24 family. In terms of assembly, homodimer.

It catalyses the reaction Hydrolysis of Ala-|-Gly bond in repressor LexA.. Functionally, represses a number of genes involved in the response to DNA damage (SOS response), including recA and lexA. In the presence of single-stranded DNA, RecA interacts with LexA causing an autocatalytic cleavage which disrupts the DNA-binding part of LexA, leading to derepression of the SOS regulon and eventually DNA repair. This Nocardioides sp. (strain ATCC BAA-499 / JS614) protein is LexA repressor.